Here is a 314-residue protein sequence, read N- to C-terminus: GATA zinc finger domain-containing protein 19 (314 aa).

The polypeptide is GATA zinc finger domain-containing protein 19 (gtaS) (Dictyostelium discoideum (Social amoeba)).